The sequence spans 211 residues: Large ribosomal subunit protein uL3 (211 aa).

It belongs to the universal ribosomal protein uL3 family. Part of the 50S ribosomal subunit. Forms a cluster with proteins L14 and L19.

Functionally, one of the primary rRNA binding proteins, it binds directly near the 3'-end of the 23S rRNA, where it nucleates assembly of the 50S subunit. The polypeptide is Large ribosomal subunit protein uL3 (Trichlorobacter lovleyi (strain ATCC BAA-1151 / DSM 17278 / SZ) (Geobacter lovleyi)).